The chain runs to 597 residues: MGKKKIATLSAILSLSITSGVSSTTAYADNKETNYINENDVKLNGKVSEALQSNMKIELENGMTKPIYSLDEAIIENLFVETEVDSDRDGKKDRVSVKVMRPKTDSNVKVPVIYEMSPYRAGLKDVPVYNVDEELYAYEGKPYGAVNLGSYGNYYVPRGYAVILGESIGTGKSEGCPTTGDEQEILGTKSVIDWVNGRAKAYKENGEEVKADWSTGNVGMTGVSYNGTLPNAVATTGVEGLKTIIPIAAISSWYDYYRANGAVIAPGGYQGEDTDNMAEAVLTRENPEVCGQVIKELTAGQDRKTGNYNDFWDKRNYVKDAKNVKASVFVVHGLNDWNVKTKQFAQWWEALGENNVPRKMWLHQGGHGGTSTNDWQRTQNKWFDYWLYGIENGIMNEPMVDVQRENKTWDKMKNWPDPSAVPSKVRMYLSNKAVNLPLSMGSVNKMFSFVDDAKMKSNQLVANPELEVANRLVYTMPVLQKDTRISGTPKISITGNIDRSVSNLTALLVDYGGAKPEIVTRGWMDPQNVKSIENSTAIQPGKDYTFTWDMQPDDYVFKAGHQIGVVLMASDYDYTIRPKAGTKLTVKLSEVTLPIVK.

Active-site charge relay system residues include Ser-224, Asp-336, and His-367.

Belongs to the peptidase S15 family.

The enzyme catalyses Hydrolyzes Xaa-Pro-|- bonds to release unblocked, N-terminal dipeptides from substrates including Ala-Pro-|-p-nitroanilide and (sequentially) Tyr-Pro-|-Phe-Pro-|-Gly-Pro-|-Ile.. This Bacillus anthracis protein is Putative Xaa-Pro dipeptidyl-peptidase.